We begin with the raw amino-acid sequence, 56 residues long: U-limacoditoxin(3)-Dv21 (56 aa).

The signal sequence occupies residues 1–19; it reads MKKVIMLLLIFALFAYALS. Cystine bridges form between cysteine 26-cysteine 41, cysteine 33-cysteine 46, and cysteine 40-cysteine 53.

Belongs to the limacoditoxin-22 family. Expressed by the venom secretory cell of the spine. The spine is a cuticular structure containing a single large nucleated venom-secreting cell at its base. It is an independent unit capable of producing, storing and injecting venom. On the back of D.vulnerans caterpillars, spines are grouped together by 50 to 100 to form scoli, of which there are eight in D.vulnerans.

It is found in the secreted. In terms of biological role, probable toxin. Shows a moderate antiparasitic activity against the major pathogenic nematode of ruminants (H.contortus, IC(50)=22.1 uM). Does not show insecticidal activities. Does not induce increase in intracellular calcium in mouse DRG neurons, suggesting that it does not induce pain. The sequence is that of U-limacoditoxin(3)-Dv21 from Doratifera vulnerans (Mottled cup moth).